Here is a 269-residue protein sequence, read N- to C-terminus: Tryptophan synthase alpha chain (269 aa).

Catalysis depends on proton acceptor residues Glu-49 and Asp-60.

Belongs to the TrpA family. Tetramer of two alpha and two beta chains.

It carries out the reaction (1S,2R)-1-C-(indol-3-yl)glycerol 3-phosphate + L-serine = D-glyceraldehyde 3-phosphate + L-tryptophan + H2O. It functions in the pathway amino-acid biosynthesis; L-tryptophan biosynthesis; L-tryptophan from chorismate: step 5/5. In terms of biological role, the alpha subunit is responsible for the aldol cleavage of indoleglycerol phosphate to indole and glyceraldehyde 3-phosphate. The chain is Tryptophan synthase alpha chain from Klebsiella aerogenes (Enterobacter aerogenes).